The following is a 316-amino-acid chain: 4-hydroxy-3-methylbut-2-enyl diphosphate reductase (316 aa).

Residue Cys-12 coordinates [4Fe-4S] cluster. His-41 and His-74 together coordinate (2E)-4-hydroxy-3-methylbut-2-enyl diphosphate. His-41 and His-74 together coordinate dimethylallyl diphosphate. Residues His-41 and His-74 each contribute to the isopentenyl diphosphate site. A [4Fe-4S] cluster-binding site is contributed by Cys-96. His-124 is a (2E)-4-hydroxy-3-methylbut-2-enyl diphosphate binding site. His-124 is a dimethylallyl diphosphate binding site. An isopentenyl diphosphate-binding site is contributed by His-124. Glu-126 acts as the Proton donor in catalysis. A (2E)-4-hydroxy-3-methylbut-2-enyl diphosphate-binding site is contributed by Thr-168. Cys-198 is a [4Fe-4S] cluster binding site. Residues Ser-226, Ser-227, Asn-228, and Ser-270 each contribute to the (2E)-4-hydroxy-3-methylbut-2-enyl diphosphate site. Dimethylallyl diphosphate contacts are provided by Ser-226, Ser-227, Asn-228, and Ser-270. Isopentenyl diphosphate is bound by residues Ser-226, Ser-227, Asn-228, and Ser-270.

This sequence belongs to the IspH family. [4Fe-4S] cluster is required as a cofactor.

It carries out the reaction isopentenyl diphosphate + 2 oxidized [2Fe-2S]-[ferredoxin] + H2O = (2E)-4-hydroxy-3-methylbut-2-enyl diphosphate + 2 reduced [2Fe-2S]-[ferredoxin] + 2 H(+). The catalysed reaction is dimethylallyl diphosphate + 2 oxidized [2Fe-2S]-[ferredoxin] + H2O = (2E)-4-hydroxy-3-methylbut-2-enyl diphosphate + 2 reduced [2Fe-2S]-[ferredoxin] + 2 H(+). It participates in isoprenoid biosynthesis; dimethylallyl diphosphate biosynthesis; dimethylallyl diphosphate from (2E)-4-hydroxy-3-methylbutenyl diphosphate: step 1/1. The protein operates within isoprenoid biosynthesis; isopentenyl diphosphate biosynthesis via DXP pathway; isopentenyl diphosphate from 1-deoxy-D-xylulose 5-phosphate: step 6/6. Its function is as follows. Catalyzes the conversion of 1-hydroxy-2-methyl-2-(E)-butenyl 4-diphosphate (HMBPP) into a mixture of isopentenyl diphosphate (IPP) and dimethylallyl diphosphate (DMAPP). Acts in the terminal step of the DOXP/MEP pathway for isoprenoid precursor biosynthesis. In Marinobacter nauticus (strain ATCC 700491 / DSM 11845 / VT8) (Marinobacter aquaeolei), this protein is 4-hydroxy-3-methylbut-2-enyl diphosphate reductase.